A 463-amino-acid chain; its full sequence is Aurantioclavine synthase cnsA (463 aa).

Residues 16–199 (ERFNQRGNVF…TQATVRVFPD (184 aa)) form the FAD-binding PCMH-type domain.

This sequence belongs to the oxygen-dependent FAD-linked oxidoreductase family. FAD serves as cofactor.

It functions in the pathway alkaloid biosynthesis. In terms of biological role, FAD-linked oxidoreductase; part of the gene cluster that mediates the biosynthesis of communesins, a prominent class of indole alkaloids with great potential as pharmaceuticals. Communesins are biosynthesized by the coupling of tryptamine and aurantioclavine, two building blocks derived from L-tryptophan. The L-tryptophan decarboxylase cnsB converts L-tryptophan to tryptamine, whereas the tryptophan dimethylallyltransferase cnsF converts L-tryptophan to 4-dimethylallyl tryptophan which is further transformed to aurantioclavine by the aurantioclavine synthase cnsA, probably aided by the catalase cnsD. The cytochrome P450 monooxygenase cnsC catalyzes the heterodimeric coupling between the two different indole moieties, tryptamine and aurantioclavine, to construct vicinal quaternary stereocenters and yield the heptacyclic communesin scaffold. The O-methyltransferase cnsE then methylates the communesin scaffold to produce communesin K, the simplest characterized communesin that contains the heptacyclic core. The dioxygenase cnsJ converts communesin K into communesin I. Acylation to introduce the hexadienyl group at position N16 of communesin I by the acyltransferase cnsK leads to the production of communesin B. The hexadienyl group is produced by the highly reducing polyketide synthase cnsI, before being hydrolytically removed from cnsI by the serine hydrolase cnsH, converted into hexadienyl-CoA by the CoA ligase cnsG, and then transferred to communesin I by cnsK. Surprisingly, cnsK may also be a promiscuous acyltransferase that can tolerate a range of acyl groups, including acetyl-, propionyl-, and butyryl-CoA, which lead to communesins A, G and H respectively. The roles of the alpha-ketoglutarate-dependent dioxygenases cnsM and cnsP have still to be determined. The chain is Aurantioclavine synthase cnsA from Penicillium expansum (Blue mold rot fungus).